Here is a 302-residue protein sequence, read N- to C-terminus: Acetyl-coenzyme A carboxylase carboxyl transferase subunit beta (302 aa).

The region spanning 25–294 is the CoA carboxyltransferase N-terminal domain; sequence VWTKCDSCGQ…PHFDEAAPVS (270 aa). Zn(2+) contacts are provided by Cys29, Cys32, Cys48, and Cys51. The C4-type zinc finger occupies 29-51; it reads CDSCGQVLYRAELERNLEVCPKC. Residues 281 to 302 are disordered; it reads NQPQPHFDEAAPVSEQENQADA.

It belongs to the AccD/PCCB family. Acetyl-CoA carboxylase is a heterohexamer composed of biotin carboxyl carrier protein (AccB), biotin carboxylase (AccC) and two subunits each of ACCase subunit alpha (AccA) and ACCase subunit beta (AccD). The cofactor is Zn(2+).

The protein localises to the cytoplasm. It catalyses the reaction N(6)-carboxybiotinyl-L-lysyl-[protein] + acetyl-CoA = N(6)-biotinyl-L-lysyl-[protein] + malonyl-CoA. The protein operates within lipid metabolism; malonyl-CoA biosynthesis; malonyl-CoA from acetyl-CoA: step 1/1. In terms of biological role, component of the acetyl coenzyme A carboxylase (ACC) complex. Biotin carboxylase (BC) catalyzes the carboxylation of biotin on its carrier protein (BCCP) and then the CO(2) group is transferred by the transcarboxylase to acetyl-CoA to form malonyl-CoA. The protein is Acetyl-coenzyme A carboxylase carboxyl transferase subunit beta of Serratia proteamaculans (strain 568).